Consider the following 739-residue polypeptide: Pre-mRNA-splicing factor ATP-dependent RNA helicase ddx-15 (739 aa).

Basic and acidic residues predominate over residues 1–19 (MSSRHRLDLDGSGRGDRRR). The interval 1-49 (MSSRHRLDLDGSGRGDRRRSPNRRSRSRSRSPHRRSSPDRKRQIGAVGN) is disordered. Positions 20–35 (SPNRRSRSRSRSPHRR) are enriched in basic residues. The Helicase ATP-binding domain maps to 86–257 (MELLRNNQCI…FEDCPLLSVP (172 aa)). Residue 99–106 (GETGSGKT) participates in ATP binding. The DEAH box signature appears at 204–207 (DEAH). Residues 282–462 (TVIQIHMVEE…SVVLQLKKLG (181 aa)) enclose the Helicase C-terminal domain.

Belongs to the DEAD box helicase family. DEAH subfamily. DDX15/PRP43 sub-subfamily.

The protein localises to the nucleus. The enzyme catalyses ATP + H2O = ADP + phosphate + H(+). In terms of biological role, pre-mRNA processing factor involved in disassembly of spliceosomes after the release of mature mRNA. The chain is Pre-mRNA-splicing factor ATP-dependent RNA helicase ddx-15 from Caenorhabditis elegans.